Consider the following 290-residue polypeptide: Nucleoid occlusion protein (290 aa).

Residues 153–172 (EALAQRLGKGQSTIANKLRL) constitute a DNA-binding region (H-T-H motif).

This sequence belongs to the ParB family.

It localises to the cytoplasm. Its subcellular location is the nucleoid. In terms of biological role, effects nucleoid occlusion by binding relatively nonspecifically to DNA and preventing the assembly of the division machinery in the vicinity of the nucleoid, especially under conditions that disturb the cell cycle. It helps to coordinate cell division and chromosome segregation by preventing the formation of the Z ring through the nucleoid, which would cause chromosome breakage. This chain is Nucleoid occlusion protein, found in Bacillus cereus (strain ATCC 10987 / NRS 248).